The following is a 209-amino-acid chain: Potassium-transporting ATPase KdpC subunit (209 aa).

A helical membrane pass occupies residues Met-18–Ile-38.

This sequence belongs to the KdpC family. In terms of assembly, the system is composed of three essential subunits: KdpA, KdpB and KdpC.

It localises to the cell inner membrane. Part of the high-affinity ATP-driven potassium transport (or Kdp) system, which catalyzes the hydrolysis of ATP coupled with the electrogenic transport of potassium into the cytoplasm. This subunit acts as a catalytic chaperone that increases the ATP-binding affinity of the ATP-hydrolyzing subunit KdpB by the formation of a transient KdpB/KdpC/ATP ternary complex. The polypeptide is Potassium-transporting ATPase KdpC subunit (Xanthomonas oryzae pv. oryzae (strain MAFF 311018)).